The sequence spans 386 residues: Succinate--CoA ligase [ADP-forming] subunit beta (386 aa).

ATP is bound by residues K46, E99, A102, and E107. Mg(2+) is bound by residues N199 and D213. Substrate contacts are provided by residues N264 and 321–323; that span reads GIM.

It belongs to the succinate/malate CoA ligase beta subunit family. Heterotetramer of two alpha and two beta subunits. The cofactor is Mg(2+).

The enzyme catalyses succinate + ATP + CoA = succinyl-CoA + ADP + phosphate. It catalyses the reaction GTP + succinate + CoA = succinyl-CoA + GDP + phosphate. It functions in the pathway carbohydrate metabolism; tricarboxylic acid cycle; succinate from succinyl-CoA (ligase route): step 1/1. Its function is as follows. Succinyl-CoA synthetase functions in the citric acid cycle (TCA), coupling the hydrolysis of succinyl-CoA to the synthesis of either ATP or GTP and thus represents the only step of substrate-level phosphorylation in the TCA. The beta subunit provides nucleotide specificity of the enzyme and binds the substrate succinate, while the binding sites for coenzyme A and phosphate are found in the alpha subunit. The chain is Succinate--CoA ligase [ADP-forming] subunit beta from Orientia tsutsugamushi (strain Boryong) (Rickettsia tsutsugamushi).